The sequence spans 225 residues: Uridylate kinase (225 aa).

9-10 (GS) serves as a coordination point for ATP. Gly44 contacts UMP. ATP-binding residues include Gly45 and Arg49. UMP is bound by residues Asp66 and 114 to 120 (THPGHTT). Positions 140, 141, 146, and 149 each coordinate ATP.

The protein belongs to the UMP kinase family. In terms of assembly, homohexamer.

The protein resides in the cytoplasm. The enzyme catalyses UMP + ATP = UDP + ADP. It participates in pyrimidine metabolism; CTP biosynthesis via de novo pathway; UDP from UMP (UMPK route): step 1/1. With respect to regulation, inhibited by UTP. Its function is as follows. Catalyzes the reversible phosphorylation of UMP to UDP. The chain is Uridylate kinase from Thermococcus onnurineus (strain NA1).